A 51-amino-acid chain; its full sequence is Large ribosomal subunit protein eL39 (51 aa).

The protein belongs to the eukaryotic ribosomal protein eL39 family. Interacts with YIH1.

This is Large ribosomal subunit protein eL39 (RPL39) from Kluyveromyces marxianus (Yeast).